The following is a 90-amino-acid chain: UPF0237 protein NMA1909 (90 aa).

In terms of domain architecture, ACT spans 5–83; it reads VITVIGKDRV…LDIRMQNEEI (79 aa).

Belongs to the UPF0237 family.

This Neisseria meningitidis serogroup A / serotype 4A (strain DSM 15465 / Z2491) protein is UPF0237 protein NMA1909.